The primary structure comprises 300 residues: MPLYSQIRQSEDAFSEPTYAATNELINDNENACPHCRQERSESWFLKGGRSIVYVSLTFFVVSIGLNFILAILLYSKFHASSFQTEWSAAVADTDCVRRLVAYTPALDSIEYFATNLRDAYRSNDQYLGPPTKEREQMWQDLWLHEAIMVETWAMPLLNRINLDPYEKVEGELGDGYNALLQVHHQLGCLDILRQYTWLLSGKYTTDGIPVPIFLQKPPEENRRHVDQCIEELRMGLMCHGDMTPLLITKKRDGASGFKADMNTHYMCRNFTKLQEWTMSHGVEHWELGDGRGPHEHGRR.

Residues 52-72 (IVYVSLTFFVVSIGLNFILAI) traverse the membrane as a helical segment. 2 short sequence motifs (HXXHC) span residues 185 to 189 (HQLGC) and 225 to 229 (HVDQC). Asn270 carries an N-linked (GlcNAc...) asparagine glycan.

It belongs to the ustYa family.

It is found in the membrane. Its pathway is mycotoxin biosynthesis. Functionally, transacylase; part of the gene cluster that mediates the biosynthesis of the mycotoxin cyclochlorotine, a hepatotoxic and carcinogenic cyclic chlorinated pentapeptide. Within the pathway, cctO catalyzes the intramolecular O,N-transacylation from isocyclochlorotine to cyclochlorotine. The NRPS cctN initially catalyzes the condensation of L-serine (Ser), Pro, L-2-aminobutyrate (2Abu), Ser, and beta-Phe in this order to produce isocyclotine. After the dichlorination of Pro2 catalyzed by cctP2 to produce isocyclochlorotine, the cctO-mediated transacylation of isocyclochlorotine can furnish cyclochlorotine. The subsequent hydroxylation of cyclochlorotine by cctR yields hydroxycyclochlorotine as the final product. CctP1 probably acts as a phenylalanine aminomutase and provides the uncommon building block beta-Phe. Furthermore, 2Abu can be synthesized from threonine by one of the threonine dehydratases and transaminases localized outside of the cluster. The functions of the remaining proteins encoded by the cluster, cctM and cctT, have not been identified yet. In Talaromyces islandicus (Penicillium islandicum), this protein is Transacylase cctO.